A 174-amino-acid polypeptide reads, in one-letter code: Ribosome maturation factor RimM (174 aa).

Residues 101–174 (AGEFYLADLC…IELLQRWILE (74 aa)) form the PRC barrel domain.

This sequence belongs to the RimM family. Binds ribosomal protein uS19.

The protein localises to the cytoplasm. Its function is as follows. An accessory protein needed during the final step in the assembly of 30S ribosomal subunit, possibly for assembly of the head region. Essential for efficient processing of 16S rRNA. May be needed both before and after RbfA during the maturation of 16S rRNA. It has affinity for free ribosomal 30S subunits but not for 70S ribosomes. The chain is Ribosome maturation factor RimM from Treponema pallidum (strain Nichols).